A 352-amino-acid chain; its full sequence is Glycerol-1-phosphate dehydrogenase [NAD(P)+] (352 aa).

Residues 98–102 (GKPID) and 120–123 (TAAS) each bind NAD(+). A substrate-binding site is contributed by aspartate 125. An NAD(+)-binding site is contributed by serine 129. Position 172 (aspartate 172) interacts with substrate. Aspartate 172 and histidine 252 together coordinate Zn(2+). Histidine 256 serves as a coordination point for substrate. Histidine 268 contributes to the Zn(2+) binding site.

This sequence belongs to the glycerol-1-phosphate dehydrogenase family. Zn(2+) serves as cofactor.

Its subcellular location is the cytoplasm. It catalyses the reaction sn-glycerol 1-phosphate + NAD(+) = dihydroxyacetone phosphate + NADH + H(+). The enzyme catalyses sn-glycerol 1-phosphate + NADP(+) = dihydroxyacetone phosphate + NADPH + H(+). The protein operates within membrane lipid metabolism; glycerophospholipid metabolism. Its function is as follows. Catalyzes the NAD(P)H-dependent reduction of dihydroxyacetonephosphate (DHAP or glycerone phosphate) to glycerol 1-phosphate (G1P). The G1P thus generated is used as the glycerophosphate backbone of phospholipids in the cellular membranes of Archaea. In Natronomonas pharaonis (strain ATCC 35678 / DSM 2160 / CIP 103997 / JCM 8858 / NBRC 14720 / NCIMB 2260 / Gabara) (Halobacterium pharaonis), this protein is Glycerol-1-phosphate dehydrogenase [NAD(P)+].